Here is a 752-residue protein sequence, read N- to C-terminus: Phosphoribosylformylglycinamidine synthase subunit PurL (752 aa).

The active site involves H58. ATP is bound by residues Y61 and K103. E105 lines the Mg(2+) pocket. Substrate contacts are provided by residues 106–109 (SHNH) and R128. The Proton acceptor role is filled by H107. D129 contributes to the Mg(2+) binding site. A substrate-binding site is contributed by Q253. A Mg(2+)-binding site is contributed by D281. Residue 325 to 327 (ESQ) participates in substrate binding. Positions 513 and 550 each coordinate ATP. A Mg(2+)-binding site is contributed by N551. Position 553 (S553) interacts with substrate.

The protein belongs to the FGAMS family. Monomer. Part of the FGAM synthase complex composed of 1 PurL, 1 PurQ and 2 PurS subunits.

Its subcellular location is the cytoplasm. The enzyme catalyses N(2)-formyl-N(1)-(5-phospho-beta-D-ribosyl)glycinamide + L-glutamine + ATP + H2O = 2-formamido-N(1)-(5-O-phospho-beta-D-ribosyl)acetamidine + L-glutamate + ADP + phosphate + H(+). Its pathway is purine metabolism; IMP biosynthesis via de novo pathway; 5-amino-1-(5-phospho-D-ribosyl)imidazole from N(2)-formyl-N(1)-(5-phospho-D-ribosyl)glycinamide: step 1/2. Functionally, part of the phosphoribosylformylglycinamidine synthase complex involved in the purines biosynthetic pathway. Catalyzes the ATP-dependent conversion of formylglycinamide ribonucleotide (FGAR) and glutamine to yield formylglycinamidine ribonucleotide (FGAM) and glutamate. The FGAM synthase complex is composed of three subunits. PurQ produces an ammonia molecule by converting glutamine to glutamate. PurL transfers the ammonia molecule to FGAR to form FGAM in an ATP-dependent manner. PurS interacts with PurQ and PurL and is thought to assist in the transfer of the ammonia molecule from PurQ to PurL. This Streptomyces coelicolor (strain ATCC BAA-471 / A3(2) / M145) protein is Phosphoribosylformylglycinamidine synthase subunit PurL.